We begin with the raw amino-acid sequence, 1690 residues long: rRNA biogenesis protein rrp5 (1690 aa).

Disordered regions lie at residues 1–42 (MAGN…GASS) and 59–90 (FMES…ELDN). Polar residues predominate over residues 11–32 (ASEGSDSQGNERISSLSANEAT). The span at 72 to 83 (KTRPKKKGSKKS) shows a compositional bias: basic residues. S1 motif domains lie at 109–209 (GSLI…LSLK), 226–289 (GSMI…LTAT), 306–376 (GDYI…VSFL), 398–473 (GFIV…LSFQ), 490–559 (GQFV…LTLK), 579–648 (GTQT…VGCR), 666–739 (GSVL…LSLK), 761–830 (GIKY…MSFK), 866–942 (GKIT…ISHR), 973–1044 (GDEV…IGPL), 1053–1122 (GSRL…LSAR), 1147–1216 (GDIC…MSLK), and 1236–1307 (GSNL…LGLK). The segment at 1313–1424 (SDSDISMSDN…EEKDLDEIPS (112 aa)) is disordered. 3 stretches are compositionally biased toward acidic residues: residues 1348–1367 (QSEE…EEEP), 1390–1400 (DTEDSEDEEDE), and 1412–1421 (FDDEEKDLDE). A Phosphothreonine modification is found at Thr-1391. Position 1394 is a phosphoserine (Ser-1394). HAT repeat units lie at residues 1420 to 1452 (DEIP…YHLN), 1526 to 1558 (GKVD…FLLN), and 1596 to 1628 (GDPE…MEMK). A phosphoserine mark is found at Ser-1684 and Ser-1686.

As to quaternary structure, component of the ribosomal small subunit (SSU) processome.

The protein localises to the nucleus. Its subcellular location is the nucleolus. Functionally, involved in the biogenesis of rRNA. Required for the formation of 18S and 5.8S rRNA. The sequence is that of rRNA biogenesis protein rrp5 from Schizosaccharomyces pombe (strain 972 / ATCC 24843) (Fission yeast).